The following is a 590-amino-acid chain: TPR repeat-containing protein PA4667 (590 aa).

TPR repeat units follow at residues valine 235 to aspartate 268, lysine 269 to aspartate 302, leucine 370 to tyrosine 403, isoleucine 405 to aspartate 438, and proline 508 to histidine 541.

The polypeptide is TPR repeat-containing protein PA4667 (Pseudomonas aeruginosa (strain ATCC 15692 / DSM 22644 / CIP 104116 / JCM 14847 / LMG 12228 / 1C / PRS 101 / PAO1)).